The chain runs to 72 residues: Translation initiation factor IF-1 (72 aa).

The 72-residue stretch at 1–72 folds into the S1-like domain; sequence MAKDDVIEVD…DKGRITFRYK (72 aa).

Belongs to the IF-1 family. As to quaternary structure, component of the 30S ribosomal translation pre-initiation complex which assembles on the 30S ribosome in the order IF-2 and IF-3, IF-1 and N-formylmethionyl-tRNA(fMet); mRNA recruitment can occur at any time during PIC assembly.

It is found in the cytoplasm. Its function is as follows. One of the essential components for the initiation of protein synthesis. Stabilizes the binding of IF-2 and IF-3 on the 30S subunit to which N-formylmethionyl-tRNA(fMet) subsequently binds. Helps modulate mRNA selection, yielding the 30S pre-initiation complex (PIC). Upon addition of the 50S ribosomal subunit IF-1, IF-2 and IF-3 are released leaving the mature 70S translation initiation complex. The polypeptide is Translation initiation factor IF-1 (Wolinella succinogenes (strain ATCC 29543 / DSM 1740 / CCUG 13145 / JCM 31913 / LMG 7466 / NCTC 11488 / FDC 602W) (Vibrio succinogenes)).